The following is a 528-amino-acid chain: Putative B3 domain-containing protein REM15 (528 aa).

2 DNA-binding regions (TF-B3) span residues 3–95 (HQHF…LGPS) and 135–231 (CFVA…LPNE). Residues 234 to 253 (EEANEVSLPEEPESDAERNL) form a disordered region. DNA-binding regions (TF-B3) lie at residues 279 to 376 (CFVA…IPNE) and 425 to 522 (QSSL…FCSK).

Its subcellular location is the nucleus. In Arabidopsis thaliana (Mouse-ear cress), this protein is Putative B3 domain-containing protein REM15 (REM15.15).